The primary structure comprises 143 residues: Transcriptional regulator MraZ (143 aa).

2 SpoVT-AbrB domains span residues Q5–E47 and A76–V119.

This sequence belongs to the MraZ family. Forms oligomers.

The protein localises to the cytoplasm. The protein resides in the nucleoid. The sequence is that of Transcriptional regulator MraZ from Thermoanaerobacter sp. (strain X514).